A 151-amino-acid polypeptide reads, in one-letter code: Large ribosomal subunit protein uL15 (151 aa).

The interval 1 to 51 (MPLKIEDLKPTPGSRKPKKRLGRGIGSGLGKTAGKGHKGEKARGRGKIGRT) is disordered. Residues 23-33 (RGIGSGLGKTA) are compositionally biased toward gly residues.

The protein belongs to the universal ribosomal protein uL15 family. In terms of assembly, part of the 50S ribosomal subunit.

In terms of biological role, binds to the 23S rRNA. In Petrotoga mobilis (strain DSM 10674 / SJ95), this protein is Large ribosomal subunit protein uL15.